Consider the following 283-residue polypeptide: Pantothenate synthetase (283 aa).

An ATP-binding site is contributed by methionine 30–histidine 37. The Proton donor role is filled by histidine 37. Glutamine 61 contacts (R)-pantoate. Glutamine 61 contacts beta-alanine. Glycine 149–aspartate 152 is a binding site for ATP. Residue glutamine 155 participates in (R)-pantoate binding. ATP is bound by residues isoleucine 178 and methionine 186–arginine 189.

The protein belongs to the pantothenate synthetase family. In terms of assembly, homodimer.

The protein resides in the cytoplasm. The enzyme catalyses (R)-pantoate + beta-alanine + ATP = (R)-pantothenate + AMP + diphosphate + H(+). It functions in the pathway cofactor biosynthesis; (R)-pantothenate biosynthesis; (R)-pantothenate from (R)-pantoate and beta-alanine: step 1/1. In terms of biological role, catalyzes the condensation of pantoate with beta-alanine in an ATP-dependent reaction via a pantoyl-adenylate intermediate. This is Pantothenate synthetase from Shewanella halifaxensis (strain HAW-EB4).